A 192-amino-acid chain; its full sequence is Probable GTP-binding protein EngB (192 aa).

An EngB-type G domain is found at 22–192 (NLPQIVIVGR…QVLSIFEKYA (171 aa)). GTP contacts are provided by residues 30–37 (GRSNVGKS), 57–61 (GKTRG), 75–78 (DLPG), 142–145 (TKAD), and 173–175 (FSA). Residues serine 37 and threonine 59 each contribute to the Mg(2+) site.

This sequence belongs to the TRAFAC class TrmE-Era-EngA-EngB-Septin-like GTPase superfamily. EngB GTPase family. It depends on Mg(2+) as a cofactor.

Its function is as follows. Necessary for normal cell division and for the maintenance of normal septation. This is Probable GTP-binding protein EngB from Thermoanaerobacter pseudethanolicus (strain ATCC 33223 / 39E) (Clostridium thermohydrosulfuricum).